The sequence spans 168 residues: MVEDILAPGLRVVFCGINPGLSSAEKGFPFAHPANRFWKVIHQAGFTDRQLKPQEAQLLLDYRCGVTKLVDRPTVQANEVTKLELHAGGRKLIEKIEDYQPQALAILGKQAYEQGFSQRGTQWGKQTHTIGATQIWVLPNPSGLSRVSLEKLVEAYRELDQSLVMRGL.

This sequence belongs to the uracil-DNA glycosylase (UDG) superfamily. TDG/mug family. Binds DNA as a monomer.

It localises to the cytoplasm. The enzyme catalyses Specifically hydrolyzes mismatched double-stranded DNA and polynucleotides, releasing free uracil.. Its function is as follows. Excises ethenocytosine and uracil, which can arise by alkylation or deamination of cytosine, respectively, from the corresponding mispairs with guanine in ds-DNA. It is capable of hydrolyzing the carbon-nitrogen bond between the sugar-phosphate backbone of the DNA and the mispaired base. The complementary strand guanine functions in substrate recognition. Required for DNA damage lesion repair in stationary-phase cells. This Escherichia fergusonii (strain ATCC 35469 / DSM 13698 / CCUG 18766 / IAM 14443 / JCM 21226 / LMG 7866 / NBRC 102419 / NCTC 12128 / CDC 0568-73) protein is G/U mismatch-specific DNA glycosylase.